The sequence spans 129 residues: Trefoil factor 2 (129 aa).

A signal peptide spans 1–23 (MGPRGAPLLAVVLVLGLHALVEG). P-type domains follow at residues 29-73 (CRCS…FHPL) and 79-122 (EQCV…FFPQ). Cystine bridges form between cysteine 29–cysteine 127, cysteine 31–cysteine 58, cysteine 42–cysteine 57, cysteine 52–cysteine 69, cysteine 81–cysteine 107, cysteine 91–cysteine 106, and cysteine 101–cysteine 118.

Stomach and pancreas.

It is found in the secreted. Its function is as follows. Inhibits gastrointestinal motility and gastric acid secretion. Could function as a structural component of gastric mucus, possibly by stabilizing glycoproteins in the mucus gel through interactions with carbohydrate side chains. The sequence is that of Trefoil factor 2 (Tff2) from Mus musculus (Mouse).